The sequence spans 189 residues: Crossover junction endodeoxyribonuclease RuvC (189 aa).

Residues aspartate 8, glutamate 67, and aspartate 139 contribute to the active site. The Mg(2+) site is built by aspartate 8, glutamate 67, and aspartate 139.

It belongs to the RuvC family. Homodimer which binds Holliday junction (HJ) DNA. The HJ becomes 2-fold symmetrical on binding to RuvC with unstacked arms; it has a different conformation from HJ DNA in complex with RuvA. In the full resolvosome a probable DNA-RuvA(4)-RuvB(12)-RuvC(2) complex forms which resolves the HJ. The cofactor is Mg(2+).

It is found in the cytoplasm. It catalyses the reaction Endonucleolytic cleavage at a junction such as a reciprocal single-stranded crossover between two homologous DNA duplexes (Holliday junction).. Its function is as follows. The RuvA-RuvB-RuvC complex processes Holliday junction (HJ) DNA during genetic recombination and DNA repair. Endonuclease that resolves HJ intermediates. Cleaves cruciform DNA by making single-stranded nicks across the HJ at symmetrical positions within the homologous arms, yielding a 5'-phosphate and a 3'-hydroxyl group; requires a central core of homology in the junction. The consensus cleavage sequence is 5'-(A/T)TT(C/G)-3'. Cleavage occurs on the 3'-side of the TT dinucleotide at the point of strand exchange. HJ branch migration catalyzed by RuvA-RuvB allows RuvC to scan DNA until it finds its consensus sequence, where it cleaves and resolves the cruciform DNA. The protein is Crossover junction endodeoxyribonuclease RuvC of Histophilus somni (strain 129Pt) (Haemophilus somnus).